The sequence spans 78 residues: Metallothionein-like protein type 2 (78 aa).

It belongs to the metallothionein superfamily. Type 15 family.

Functionally, metallothioneins have a high content of cysteine residues that bind various heavy metals. This is Metallothionein-like protein type 2 from Musa acuminata (Banana).